The following is a 560-amino-acid chain: Cytosolic purine 5'-nucleotidase (560 aa).

Residue D52 is the Nucleophile of the active site. Residues D52 and D54 each contribute to the IMP site. Mg(2+)-binding residues include D52 and D54. The active-site Proton donor is D54. ATP-binding residues include R144 and N154. The IMP site is built by R202, D206, K215, T249, N250, S251, and K292. D351 contacts Mg(2+). At S418 the chain carries Phosphoserine. ATP is bound by residues Q453 and R456. S502, S511, and S527 each carry phosphoserine. The disordered stretch occupies residues 541–560 (PQEITHCHDEDDDEEEEEEE). The tract at residues 548 to 560 (HDEDDDEEEEEEE) is required for tetramer assembly. The segment covering 550–560 (EDDDEEEEEEE) has biased composition (acidic residues).

This sequence belongs to the 5'(3')-deoxyribonucleotidase family. Homotetramer. It depends on Mg(2+) as a cofactor.

The protein localises to the cytoplasm. The protein resides in the cytosol. It catalyses the reaction a ribonucleoside 5'-phosphate + H2O = a ribonucleoside + phosphate. The catalysed reaction is a 2'-deoxyribonucleoside + a ribonucleoside 5'-phosphate = a ribonucleoside + a 2'-deoxyribonucleoside 5'-phosphate. The enzyme catalyses IMP + H2O = inosine + phosphate. It carries out the reaction GMP + H2O = guanosine + phosphate. It catalyses the reaction dGMP + H2O = 2'-deoxyguanosine + phosphate. The catalysed reaction is dIMP + H2O = 2'-deoxyinosine + phosphate. The enzyme catalyses XMP + H2O = xanthosine + phosphate. It carries out the reaction inosine + GMP = guanosine + IMP. It catalyses the reaction dGMP + inosine = 2'-deoxyguanosine + IMP. The catalysed reaction is dIMP + inosine = 2'-deoxyinosine + IMP. The enzyme catalyses inosine + UMP = uridine + IMP. It carries out the reaction inosine + CMP = cytidine + IMP. It catalyses the reaction inosine + AMP = IMP + adenosine. With respect to regulation, allosterically activated by various compounds including ATP, 2,3-BPG/2,3-Bisphosphoglyceric acid and Ap4A/P1,P4-bis(5'-adenosyl) tetraphosphate. Binding of an allosteric activator is a prerequisiste to magnesium and substrate binding. Inhibited by inorganic phosphate. Functionally, broad specificity cytosolic 5'-nucleotidase that catalyzes the dephosphorylation of 6-hydroxypurine nucleoside 5'-monophosphates. In addition, possesses a phosphotransferase activity by which it can transfer a phosphate from a donor nucleoside monophosphate to an acceptor nucleoside, preferably inosine, deoxyinosine and guanosine. Has the highest activities for IMP and GMP followed by dIMP, dGMP and XMP. Could also catalyze the transfer of phosphates from pyrimidine monophosphates but with lower efficiency. Through these activities regulates the purine nucleoside/nucleotide pools within the cell. This Mus musculus (Mouse) protein is Cytosolic purine 5'-nucleotidase.